We begin with the raw amino-acid sequence, 191 residues long: Probable DNA-directed RNA polymerase subunit delta (191 aa).

One can recognise an HTH HARE-type domain in the interval Leu-14–Trp-83. Composition is skewed to acidic residues over residues Glu-119–Asn-133 and Tyr-143–Asp-191. Positions Glu-119–Asp-191 are disordered.

It belongs to the RpoE family. In terms of assembly, RNAP is composed of a core of 2 alpha, a beta and a beta' subunits. The core is associated with a delta subunit and one of several sigma factors.

Its function is as follows. Participates in both the initiation and recycling phases of transcription. In the presence of the delta subunit, RNAP displays an increased specificity of transcription, a decreased affinity for nucleic acids, and an increased efficiency of RNA synthesis because of enhanced recycling. The protein is Probable DNA-directed RNA polymerase subunit delta of Streptococcus thermophilus (strain ATCC BAA-491 / LMD-9).